We begin with the raw amino-acid sequence, 491 residues long: Malonate-semialdehyde dehydrogenase 1 (491 aa).

Residues Ala-154, Phe-156, Lys-180, Glu-183, Arg-184, Ser-233, and Thr-255 each contribute to the NAD(+) site. Catalysis depends on Cys-288, which acts as the Nucleophile. Glu-386 serves as a coordination point for NAD(+).

Belongs to the aldehyde dehydrogenase family. IolA subfamily. As to quaternary structure, homotetramer.

It carries out the reaction 3-oxopropanoate + NAD(+) + CoA + H2O = hydrogencarbonate + acetyl-CoA + NADH + H(+). It catalyses the reaction 2-methyl-3-oxopropanoate + NAD(+) + CoA + H2O = propanoyl-CoA + hydrogencarbonate + NADH + H(+). It participates in polyol metabolism; myo-inositol degradation into acetyl-CoA; acetyl-CoA from myo-inositol: step 7/7. Catalyzes the oxidation of malonate semialdehyde (MSA) and methylmalonate semialdehyde (MMSA) into acetyl-CoA and propanoyl-CoA, respectively. Is involved in a myo-inositol catabolic pathway. Bicarbonate, and not CO2, is the end-product of the enzymatic reaction. The sequence is that of Malonate-semialdehyde dehydrogenase 1 from Shouchella clausii (strain KSM-K16) (Alkalihalobacillus clausii).